A 342-amino-acid polypeptide reads, in one-letter code: Oxygen-dependent coproporphyrinogen-III oxidase (342 aa).

Ser98 is a substrate binding site. Residues His102 and His112 each contribute to the a divalent metal cation site. His112 (proton donor) is an active-site residue. 114–116 (NYR) is a binding site for substrate. A divalent metal cation-binding residues include His146 and His176. Positions 266 to 301 (YVEFNLVWDRGTIFGLQTNGRTESILMSLPPLARWE) are important for dimerization.

The protein belongs to the aerobic coproporphyrinogen-III oxidase family. In terms of assembly, homodimer. A divalent metal cation is required as a cofactor.

It localises to the cytoplasm. It carries out the reaction coproporphyrinogen III + O2 + 2 H(+) = protoporphyrinogen IX + 2 CO2 + 2 H2O. It participates in porphyrin-containing compound metabolism; protoporphyrin-IX biosynthesis; protoporphyrinogen-IX from coproporphyrinogen-III (O2 route): step 1/1. Functionally, involved in the heme and chlorophyll biosynthesis. Catalyzes the aerobic oxidative decarboxylation of propionate groups of rings A and B of coproporphyrinogen-III to yield the vinyl groups in protoporphyrinogen-IX. This Prochlorococcus marinus (strain MIT 9515) protein is Oxygen-dependent coproporphyrinogen-III oxidase.